The chain runs to 174 residues: Probable adenylyl-sulfate kinase (174 aa).

10–17 (GPSGAGKT) contributes to the ATP binding site. Ser-84 (phosphoserine intermediate) is an active-site residue.

This sequence belongs to the APS kinase family.

It carries out the reaction adenosine 5'-phosphosulfate + ATP = 3'-phosphoadenylyl sulfate + ADP + H(+). The protein operates within sulfur metabolism; hydrogen sulfide biosynthesis; sulfite from sulfate: step 2/3. In terms of biological role, catalyzes the synthesis of activated sulfate. The protein is Probable adenylyl-sulfate kinase (cysC) of Pyrococcus abyssi (strain GE5 / Orsay).